A 479-amino-acid polypeptide reads, in one-letter code: Transmembrane protein 161A (479 aa).

The first 28 residues, 1-28 (MAVLGVQLVVTLLTATLMHRLAPHCSFA), serve as a signal peptide directing secretion. Topologically, residues 29-98 (RWLLCNGSLF…LTTVDALVLR (70 aa)) are extracellular. Asn-34 is a glycosylation site (N-linked (GlcNAc...) asparagine). A Phosphoserine modification is found at Ser-69. A helical transmembrane segment spans residues 99-119 (FFLEYQWFVDFAVYSGGVYLF). Topologically, residues 120 to 134 (TEAYYYMLGPAKETN) are cytoplasmic. Residues 135–155 (IAVFWCLLTVTFSIKMFLTVT) form a helical membrane-spanning segment. Topologically, residues 156–166 (RLYFSAEEGGE) are extracellular. The helical transmembrane segment at 167–187 (RSVCLTFAFLFLLLAMLVQVV) threads the bilayer. The Cytoplasmic segment spans residues 188-224 (REETLELGLEPGLASMTQNLEPLLKKQGWDWALPVAK). A helical transmembrane segment spans residues 225 to 245 (LAIRVGLAVVGSVLGAFLTFP). Topologically, residues 246–263 (GLRLAQTHRDALTMSEDR) are extracellular. A helical transmembrane segment spans residues 264–284 (PMLQFLLHTSFLSPLFILWLW). At 285–304 (TKPIARDFLHQPPFGETRFS) the chain is on the cytoplasmic side. Residues 305–325 (LLSDSAFDSGRLWLLVVLCLL) form a helical membrane-spanning segment. Residues 326 to 370 (RLAVTRPHLQAYLCLAKARVEQLRREAGRIEAREIQQRVVRVYCY) lie on the Extracellular side of the membrane. A helical membrane pass occupies residues 371–391 (VTVVSLQYLTPLILTLNCTLL). The Cytoplasmic segment spans residues 392–449 (LKTLGGYSWGLGPAPLLSPDPSSASAAPIGSGEDEVQQTAARIAGALGGLLTPLFLRG). Residues 450 to 470 (VLAYLIWWTAACQLLASLFGL) traverse the membrane as a helical segment. Residues 471-479 (YFHQHLAGS) are Extracellular-facing.

Belongs to the TMEM161 family.

The protein localises to the membrane. In terms of biological role, may play a role in protection against oxidative stress. Overexpression leads to reduced levels of oxidant-induced DNA damage and apoptosis. The chain is Transmembrane protein 161A (TMEM161A) from Homo sapiens (Human).